The sequence spans 230 residues: GDT1-like protein 4 (230 aa).

6 helical membrane passes run 12 to 32 (LAMT…AILA), 39 to 59 (LVLA…ATLG), 71 to 91 (THHI…WDGF), 135 to 155 (AFLT…NFFG), 175 to 195 (FGVV…AVIG), and 207 to 227 (IVAL…YLTS).

It belongs to the GDT1 family.

It is found in the membrane. The polypeptide is GDT1-like protein 4 (Arabidopsis thaliana (Mouse-ear cress)).